The following is a 981-amino-acid chain: Amidohydrolase tasK (981 aa).

Positions 1-36 are disordered; it reads MDDQKGPLPPYTPTATAPPPASMRQRRPPGRRRALR. The segment covering 7–21 has biased composition (pro residues); the sequence is PLPPYTPTATAPPPA. The span at 24 to 36 shows a compositional bias: basic residues; sequence RQRRPPGRRRALR. A helical membrane pass occupies residues 40-57; the sequence is TVRVLALACLAFVVLAQW. The disordered stretch occupies residues 86–107; sequence LRVRPQDPAGPGRSKNDRYLDG. Fe(2+) is bound by residues histidine 187 and histidine 189. Zn(2+)-binding residues include histidine 187 and histidine 189. The N-linked (GlcNAc...) asparagine glycan is linked to asparagine 407. A disordered region spans residues 819-838; it reads KKQQKQQQQQQQQQQQQHGT. The segment covering 823–835 has biased composition (low complexity); sequence KQQQQQQQQQQQQ. The N-linked (GlcNAc...) asparagine glycan is linked to asparagine 891.

This sequence belongs to the metallo-dependent hydrolases superfamily. Fe(2+) serves as cofactor. The cofactor is Mn(2+). Zn(2+) is required as a cofactor.

It localises to the membrane. In terms of biological role, amidohydrolase; part of the gene cluster that mediates the biosynthesis of the tetramic acids Sch210971 and Sch210972, potential anti-HIV fungal natural product that contain a decalin core. The PKS module of tasS together with the enoylreductase tasC catalyze the formation of the polyketide unit which is then conjugated to 4-hydroxyl-4-methyl glutamate (HMG) by the condensation domain of the tasS NRPS module. One unique structural feature of Sch210971 and Sch210972 is the tetramic acid motif proposed to be derived from the non-proteinogenic amino acid HMG, by a Dieckmann-type condensation catalyzed by the reductase domain of tasS. The aldolase tasA catalyzes the aldol condensation of 2 molecules of pyruvic acid to yield the intermediate 4-hydroxyl-4-methyl-2-oxoglutarate (HMOG), which can then be stereoselectively transaminated, may be by tasG, to form HMG. The Diels-Alderase tas3 then uses the Dieckmann product of tasS as substrate and catalyzes the Diels-Alder cycloaddition to form the decalin ring of Sch210971 and Sch210972. The polypeptide is Amidohydrolase tasK (Hapsidospora irregularis).